Consider the following 226-residue polypeptide: Phosphoribosylformylglycinamidine synthase subunit PurQ (226 aa).

The Glutamine amidotransferase type-1 domain occupies 2–226 (KIAVIVFPGS…LENGTVIAEG (225 aa)). Catalysis depends on cysteine 86, which acts as the Nucleophile. Catalysis depends on residues histidine 195 and glutamate 197.

In terms of assembly, part of the FGAM synthase complex composed of 1 PurL, 1 PurQ and 2 PurS subunits.

The protein resides in the cytoplasm. It catalyses the reaction N(2)-formyl-N(1)-(5-phospho-beta-D-ribosyl)glycinamide + L-glutamine + ATP + H2O = 2-formamido-N(1)-(5-O-phospho-beta-D-ribosyl)acetamidine + L-glutamate + ADP + phosphate + H(+). It carries out the reaction L-glutamine + H2O = L-glutamate + NH4(+). Its pathway is purine metabolism; IMP biosynthesis via de novo pathway; 5-amino-1-(5-phospho-D-ribosyl)imidazole from N(2)-formyl-N(1)-(5-phospho-D-ribosyl)glycinamide: step 1/2. Part of the phosphoribosylformylglycinamidine synthase complex involved in the purines biosynthetic pathway. Catalyzes the ATP-dependent conversion of formylglycinamide ribonucleotide (FGAR) and glutamine to yield formylglycinamidine ribonucleotide (FGAM) and glutamate. The FGAM synthase complex is composed of three subunits. PurQ produces an ammonia molecule by converting glutamine to glutamate. PurL transfers the ammonia molecule to FGAR to form FGAM in an ATP-dependent manner. PurS interacts with PurQ and PurL and is thought to assist in the transfer of the ammonia molecule from PurQ to PurL. In Limosilactobacillus fermentum (strain NBRC 3956 / LMG 18251) (Lactobacillus fermentum), this protein is Phosphoribosylformylglycinamidine synthase subunit PurQ.